Here is a 441-residue protein sequence, read N- to C-terminus: MRLSQYFLPLLKENPKEAEIISHRLMLRAGMIRQQTSGIYSWLPLGKKVLDKVCKIIREEQERAGAVEILMPTVQSADLWRESGRYDDYGLEMLRIKDRQKRDLLYGPTNEEMVTDIFRSYVHSYKDLPLNLYHIQWKFRDEIRPRFGVMRSREFLMKDAYSFDLDYEGSKTSYNRMFVAYLRTFSCLGLKAIPMRADTGPIGGELSHEFIILAETGESAIFCDKKFFELTVPHSSIDFSDKAVLANIVKQWTSFYAATEEMHNEEEWAKVSDNDRLSARGIEVGHIFHFGTKYSAPMGAKVMGQDGKEHLVSMGSYGIGPSRLVAAVIEASHDENGIIWPKSIAPFDFGIINMKPNDEKCTRACETLYSGLMQAGFDPLLDDRNERPGSKFATMDLIGLPTQIIVGPKSIAQNEVEIKDRKTGVKKSLTVENVLNQFFRI.

Belongs to the class-II aminoacyl-tRNA synthetase family. ProS type 2 subfamily. Homodimer.

The protein localises to the cytoplasm. The catalysed reaction is tRNA(Pro) + L-proline + ATP = L-prolyl-tRNA(Pro) + AMP + diphosphate. Catalyzes the attachment of proline to tRNA(Pro) in a two-step reaction: proline is first activated by ATP to form Pro-AMP and then transferred to the acceptor end of tRNA(Pro). The sequence is that of Proline--tRNA ligase from Bartonella quintana (strain Toulouse) (Rochalimaea quintana).